Consider the following 409-residue polypeptide: MHAWPASEVPALPGEGRDLRIHDTATGGVIPLHPGPVARIYVCGITPYDATHMGHAATYNAFDLVQRVWLDTKRQVHYVQNVTDVDDPLLERAERDGVDWVGLAEKETALFREDMTALRMLPPQHYIGAVEAIPGIVPLVERLRDAGAAYELDGDVYFSVEADPHFGKVSNLDAAAMRLLSAERGGDPDRPGKKNPLDPMLWMAAREGEPSWDGASLGRGRPGWHIECVAIALDHLGMGFDVQGGGSDLAFPHHEMGASHAQALTGEFPMAKAYVHAGMVALNGEKMSKSKGNLVFVSKLRRDGVDPAAIRLALLAHHYRSDWEWTDAVLEEALARLGTWRAAVSRPDGPPAEALVEEIRDALANDLDAPAALAAVDRWAALQHERGGTDEGAPGVVSRAVDALLGVAL.

C43 provides a ligand contact to Zn(2+). L-cysteinyl-5'-AMP contacts are provided by residues 43–46 (CGIT), T58, and 81–83 (NVT). Residues 45–55 (ITPYDATHMGH) carry the 'HIGH' region motif. Residues 183–188 (ERGGDP) carry the 'ERGGDP' region motif. W224 contacts L-cysteinyl-5'-AMP. C228 contacts Zn(2+). Position 246-248 (246-248 (GSD)) interacts with L-cysteinyl-5'-AMP. A Zn(2+)-binding site is contributed by H253. Residue V280 coordinates L-cysteinyl-5'-AMP. The 'KMSKS' region motif lies at 286–290 (KMSKS).

Belongs to the class-I aminoacyl-tRNA synthetase family. MshC subfamily. In terms of assembly, monomer. It depends on Zn(2+) as a cofactor.

It carries out the reaction 1D-myo-inositol 2-amino-2-deoxy-alpha-D-glucopyranoside + L-cysteine + ATP = 1D-myo-inositol 2-(L-cysteinylamino)-2-deoxy-alpha-D-glucopyranoside + AMP + diphosphate + H(+). Catalyzes the ATP-dependent condensation of GlcN-Ins and L-cysteine to form L-Cys-GlcN-Ins. The protein is L-cysteine:1D-myo-inositol 2-amino-2-deoxy-alpha-D-glucopyranoside ligase (mshC) of Streptomyces avermitilis (strain ATCC 31267 / DSM 46492 / JCM 5070 / NBRC 14893 / NCIMB 12804 / NRRL 8165 / MA-4680).